The primary structure comprises 190 residues: Small ribosomal subunit protein eS7A (190 aa).

Residue Ser2 is modified to N-acetylserine. Residues Lys83, Lys84, and Lys124 each participate in a glycyl lysine isopeptide (Lys-Gly) (interchain with G-Cter in ubiquitin) cross-link.

Belongs to the eukaryotic ribosomal protein eS7 family. As to quaternary structure, component of the small ribosomal subunit (SSU). Mature yeast ribosomes consist of a small (40S) and a large (60S) subunit. The 40S small subunit contains 1 molecule of ribosomal RNA (18S rRNA) and 33 different proteins (encoded by 57 genes). The large 60S subunit contains 3 rRNA molecules (25S, 5.8S and 5S rRNA) and 46 different proteins (encoded by 81 genes). Interacts with snoRNA U3. uS11 interacts with MPP10. Component of the ribosomal small subunit (SSU) processome composed of at least 40 protein subunits and snoRNA U3. N-terminally acetylated by acetyltransferase NatA. Post-translationally, ubiquitinated at Lys-83 and Lys-84 in response to stalled ribosomes, leading to activation of the No-Go Decay (NGD) pathway: first monoubiquitinated by MOT2/NOT4, followed by formation by HEL2 of 'Lys-63'-linked polyubiquitin chains on monoubiquitin.

The protein localises to the cytoplasm. The protein resides in the nucleus. It localises to the nucleolus. In terms of biological role, component of the ribosome, a large ribonucleoprotein complex responsible for the synthesis of proteins in the cell. The small ribosomal subunit (SSU) binds messenger RNAs (mRNAs) and translates the encoded message by selecting cognate aminoacyl-transfer RNA (tRNA) molecules. The large subunit (LSU) contains the ribosomal catalytic site termed the peptidyl transferase center (PTC), which catalyzes the formation of peptide bonds, thereby polymerizing the amino acids delivered by tRNAs into a polypeptide chain. The nascent polypeptides leave the ribosome through a tunnel in the LSU and interact with protein factors that function in enzymatic processing, targeting, and the membrane insertion of nascent chains at the exit of the ribosomal tunnel. eS7 is involved in nucleolar processing of pre-18S ribosomal RNA and ribosome assembly. The polypeptide is Small ribosomal subunit protein eS7A (Saccharomyces cerevisiae (strain ATCC 204508 / S288c) (Baker's yeast)).